Consider the following 334-residue polypeptide: S-adenosylmethionine decarboxylase proenzyme (334 aa).

Phe-7 serves as a coordination point for substrate. Active-site residues include Glu-8 and Glu-11. Residue Glu-67 coordinates substrate. Ser-68 serves as the catalytic Schiff-base intermediate with substrate; via pyruvic acid. Ser-68 bears the Pyruvic acid (Ser); by autocatalysis mark. Cys-82 serves as the catalytic Proton donor; for catalytic activity. Phe-223 is a substrate binding site. Active-site proton acceptor; for processing activity residues include Ser-229 and His-243. A substrate-binding site is contributed by Glu-247. The residue at position 298 (Ser-298) is a Phosphoserine.

This sequence belongs to the eukaryotic AdoMetDC family. As to quaternary structure, heterotetramer of two alpha and two beta chains. Requires pyruvate as cofactor. In terms of processing, is synthesized initially as an inactive proenzyme. Formation of the active enzyme involves a self-maturation process in which the active site pyruvoyl group is generated from an internal serine residue via an autocatalytic post-translational modification. Two non-identical subunits are generated from the proenzyme in this reaction, and the pyruvate is formed at the N-terminus of the alpha chain, which is derived from the carboxyl end of the proenzyme. The post-translation cleavage follows an unusual pathway, termed non-hydrolytic serinolysis, in which the side chain hydroxyl group of the serine supplies its oxygen atom to form the C-terminus of the beta chain, while the remainder of the serine residue undergoes an oxidative deamination to produce ammonia and the pyruvoyl group blocking the N-terminus of the alpha chain.

The enzyme catalyses S-adenosyl-L-methionine + H(+) = S-adenosyl 3-(methylsulfanyl)propylamine + CO2. It participates in amine and polyamine biosynthesis; S-adenosylmethioninamine biosynthesis; S-adenosylmethioninamine from S-adenosyl-L-methionine: step 1/1. In terms of biological role, essential for biosynthesis of the polyamines spermidine and spermine. Promotes maintenance and self-renewal of embryonic stem cells, by maintaining spermine levels. The polypeptide is S-adenosylmethionine decarboxylase proenzyme (AMD1) (Bos taurus (Bovine)).